The chain runs to 552 residues: Ribulokinase (552 aa).

The protein belongs to the ribulokinase family.

It carries out the reaction D-ribulose + ATP = D-ribulose 5-phosphate + ADP + H(+). The catalysed reaction is L-ribulose + ATP = L-ribulose 5-phosphate + ADP + H(+). It functions in the pathway carbohydrate degradation; L-arabinose degradation via L-ribulose; D-xylulose 5-phosphate from L-arabinose (bacterial route): step 2/3. The chain is Ribulokinase from Bacillus licheniformis (strain ATCC 14580 / DSM 13 / JCM 2505 / CCUG 7422 / NBRC 12200 / NCIMB 9375 / NCTC 10341 / NRRL NRS-1264 / Gibson 46).